A 305-amino-acid chain; its full sequence is MDFISIQQLVSGERVEGKVLGFGHGVPDPGAWPSDWRRGPQEAVAREKLKLEEEKKKKLERFNSTRFNLDNLADLENLVQRRKKRLRHRVPPRKPEPLVKPQSQAQVEPVGLEMFLKAAAENQEYLIDKYLTDGGDPNAHDKLHRTALHWACLKGHSQLVNKLLVAGATVDARDLLDRTPVFWACRGGHLVILKQLLNQGARVNARDKIGSTPLHVAVRTRHPDCLEHLIECGAHLNAQDKEGDTALHEAVRHGSYKAMKLLLLYGAELGVRNAASVTPVQLARDWQRGIREALQAHVAHPRTRC.

Positions Q41–L72 form a coiled coil. The span at K83–P92 shows a compositional bias: basic residues. The tract at residues K83–Q104 is disordered. ANK repeat units follow at residues L143–A172, L176–A205, I209–A238, and E242–V271. The interval R178–Q195 is interaction with TTN.

Interacts with titin/TTN and MYPN. Mainly expressed in heart, skeletal muscle and brown adipose tissues.

The protein resides in the nucleus. May be involved in the energy metabolism. Could be a molecular link between myofibrillar stretch-induced signaling pathways and muscle gene expression. This chain is Ankyrin repeat domain-containing protein 23 (ANKRD23), found in Homo sapiens (Human).